A 345-amino-acid chain; its full sequence is BAG family molecular chaperone regulator 1 (345 aa).

Residues 1–137 are disordered; it reads MAQRGGARRP…STRSEEVTRE (137 aa). The span at 68–80 shows a compositional bias: basic residues; sequence RRPRMKKKTRRRS. Over residues 81 to 91 the composition is skewed to basic and acidic residues; the sequence is TRSEELTRSEE. Over residues 95–114 the composition is skewed to low complexity; sequence SEEATWSEEATQSEEATQGE. Repeat copies occupy residues 96–101, 102–107, 108–113, 114–119, 120–125, 126–131, and 132–137. The segment at 96–137 is 7 X 6 AA tandem repeat of E-E-X(4); the sequence is EEATWSEEATQSEEATQGEEMNRSQEVTRDEESTRSEEVTRE. Positions 115–137 are enriched in basic and acidic residues; that stretch reads EMNRSQEVTRDEESTRSEEVTRE. Positions 144–224 constitute a Ubiquitin-like domain; it reads LTVTVTHSNE…VMLIGKKNSP (81 aa). The segment at 172–219 is interaction with HSPA8; the sequence is DLAQVVEEVIGVPQSFQKLIFKGKSLKEMETPLSALGIQDGCRVMLIG. Positions 216-345 are interaction with PPP1R15A; the sequence is MLIGKKNSPQ…LQSTNFALAE (130 aa). Position 223 is a phosphoserine (serine 223). The 81-residue stretch at 246 to 326 folds into the BAG domain; the sequence is QLEELNKELT…AFLAECDTVE (81 aa).

In terms of assembly, homodimer. Forms a heteromeric complex with HSP70/HSC70. Binds to the ATPase domain of HSP/HSC70 chaperones. Isoform 1, isoform 3 and isoform 4 but not isoform 2 interact with HSPA8/HSC70. Interacts with NR3C1. Interacts with the N-terminal region of MAPRE2. Interacts with PPP1R15A. Interacts with BCL2 in an ATP-dependent manner. Isoform 2 does not interact with BCL2. Interacts with SIAH1. Interacts with HSPA8 (via NBD). Interacts with HSPA1A (via NBD) and HSPA1B (via NBD). Interacts with SIAH2. Interacts with ESR1; the interaction is promoted in the absence of estradiol (17-beta-estradiol/E2). In terms of processing, ubiquitinated; mediated by SIAH1 or SIAH2 and leading to its subsequent proteasomal degradation. Isoform 4 is the most abundantly expressed isoform. It is ubiquitously expressed throughout most tissues, except the liver, colon, breast and uterine myometrium. Isoform 1 is expressed in the ovary and testis. Isoform 4 is expressed in several types of tumor cell lines, and at consistently high levels in leukemia and lymphoma cell lines. Isoform 1 is expressed in the prostate, breast and leukemia cell lines. Isoform 3 is the least abundant isoform in tumor cell lines (at protein level).

The protein localises to the nucleus. It is found in the cytoplasm. Co-chaperone for HSP70 and HSC70 chaperone proteins. Acts as a nucleotide-exchange factor (NEF) promoting the release of ADP from the HSP70 and HSC70 proteins thereby triggering client/substrate protein release. Nucleotide release is mediated via its binding to the nucleotide-binding domain (NBD) of HSPA8/HSC70 where as the substrate release is mediated via its binding to the substrate-binding domain (SBD) of HSPA8/HSC70. Inhibits the pro-apoptotic function of PPP1R15A, and has anti-apoptotic activity. Markedly increases the anti-cell death function of BCL2 induced by various stimuli. Involved in the STUB1-mediated proteasomal degradation of ESR1 in response to age-related circulating estradiol (17-beta-estradiol/E2) decline, thereby promotes neuronal apoptosis in response to ischemic reperfusion injury. The protein is BAG family molecular chaperone regulator 1 (BAG1) of Homo sapiens (Human).